A 215-amino-acid polypeptide reads, in one-letter code: uncharacterized protein (215 aa).

6 helical membrane passes run 21–40 (IIKY…VLIN), 50–69 (LIFS…TIIF), 95–117 (FVAI…YVFF), 122–144 (LEIA…LVVL), 157–179 (NFVG…LILQ), and 185–207 (LIFI…SAYL).

Belongs to the CcmB/CycW/HelB family.

It is found in the cell membrane. This is an uncharacterized protein from Rickettsia prowazekii (strain Madrid E).